The chain runs to 180 residues: Large ribosomal subunit protein uL6 (180 aa).

Belongs to the universal ribosomal protein uL6 family. Part of the 50S ribosomal subunit.

Functionally, this protein binds to the 23S rRNA, and is important in its secondary structure. It is located near the subunit interface in the base of the L7/L12 stalk, and near the tRNA binding site of the peptidyltransferase center. The sequence is that of Large ribosomal subunit protein uL6 from Thermodesulfovibrio yellowstonii (strain ATCC 51303 / DSM 11347 / YP87).